The primary structure comprises 207 residues: MTSVALYKQDGSQNGNVELNADIFGVEPNENVVFDTILMQRASLRQGTHAVKNRSAVRGGGKKPWRQKGTGRARQGSIRSPQWVGGGVVFGPTPRSYSYRLPKKVSRLALKSVLSQKVLDESFVVVDGLAFDAPKTKEFAAVLAGLNVTTKTLVVLEDDNVTAALAARNLTNVKVIPAKGLNVLDIADADKLVITQPALSQVEEVLA.

Residues 49-77 are disordered; that stretch reads HAVKNRSAVRGGGKKPWRQKGTGRARQGS. Basic residues predominate over residues 60 to 71; sequence GGKKPWRQKGTG.

It belongs to the universal ribosomal protein uL4 family. In terms of assembly, part of the 50S ribosomal subunit.

One of the primary rRNA binding proteins, this protein initially binds near the 5'-end of the 23S rRNA. It is important during the early stages of 50S assembly. It makes multiple contacts with different domains of the 23S rRNA in the assembled 50S subunit and ribosome. Its function is as follows. Forms part of the polypeptide exit tunnel. This chain is Large ribosomal subunit protein uL4, found in Levilactobacillus brevis (strain ATCC 367 / BCRC 12310 / CIP 105137 / JCM 1170 / LMG 11437 / NCIMB 947 / NCTC 947) (Lactobacillus brevis).